The chain runs to 628 residues: Probable potassium transport system protein Kup (628 aa).

12 helical membrane passes run 15-35, 49-69, 106-126, 141-161, 174-194, 210-230, 254-274, 295-315, 343-363, 369-389, 398-418, and 425-445; these read FAAE…SPLY, FLGG…ILSV, WYLL…GVLT, ISPE…LAVF, FFGP…VYGI, IMLM…CFLA, LFVA…ILLV, LLFL…TGVF, IYVG…VLGF, LASA…ILFI, WPAP…FAFA, and IHDG…VMVS.

It belongs to the HAK/KUP transporter (TC 2.A.72) family.

It is found in the cell inner membrane. It catalyses the reaction K(+)(in) + H(+)(in) = K(+)(out) + H(+)(out). Transport of potassium into the cell. Likely operates as a K(+):H(+) symporter. The polypeptide is Probable potassium transport system protein Kup (Xanthobacter autotrophicus (strain ATCC BAA-1158 / Py2)).